The chain runs to 461 residues: Zinc transporter 6 (461 aa).

Residues 1-33 lie on the Cytoplasmic side of the membrane; sequence MGTIHLFRKPQRSFFGKLLQEFRLVAADRRSWK. Residues 34–54 traverse the membrane as a helical segment; the sequence is ILLFGAINLTCTGFLLMWCSS. Over 55–64 the chain is Extracellular; it reads TNSIALTAYT. A helical transmembrane segment spans residues 65–85; sequence YLTIFDLFSLITCLVSYWVMM. Topologically, residues 86–98 are cytoplasmic; sequence RKPSPAYSFGFER. The helical transmembrane segment at 99 to 119 threads the bilayer; that stretch reads LEVLAVFASTVLAQLGALFIL. At 120-134 the chain is on the extracellular side; the sequence is KESAERFLEQPEIHT. Residues 135–155 traverse the membrane as a helical segment; sequence GRLLVGTFVALSFNLFTMLSI. The Cytoplasmic segment spans residues 156 to 200; sequence RNKPFAYVSEAASTSWLQEHVADLSRSLCGIIPGLSSIFLPRMNP. The helical transmembrane segment at 201–221 threads the bilayer; it reads FVLIDLAGAFALCITYMLIEI. Topologically, residues 222–223 are extracellular; that stretch reads NN. A helical membrane pass occupies residues 224–244; the sequence is YFAVDTASAIAIALMTFGTMY. At 245–461 the chain is on the cytoplasmic side; sequence PMSVYSGKVL…TNNRIGQPRP (217 aa). The interval 362–393 is disordered; it reads PPLKGTDDSNPVTSTPTKPSSPPPEFSFNTPG. A compositionally biased stretch (low complexity) spans 370 to 379; it reads SNPVTSTPTK.

It belongs to the cation diffusion facilitator (CDF) transporter (TC 2.A.4) family. SLC30A subfamily. As to quaternary structure, heterodimer with SLC30A5; form a functional zinc ion transmembrane transporter.

It is found in the golgi apparatus. Its subcellular location is the trans-Golgi network membrane. Has probably no intrinsic transporter activity but together with SLC30A5 forms a functional zinc ion:proton antiporter heterodimer, mediating zinc entry into the lumen of organelles along the secretory pathway. As part of that zinc ion:proton antiporter, contributes to zinc ion homeostasis within the early secretory pathway and regulates the activation and folding of enzymes like alkaline phosphatases and enzymes involved in phosphatidylinositol glycan anchor biosynthesis. The protein is Zinc transporter 6 (SLC30A6) of Bos taurus (Bovine).